Reading from the N-terminus, the 289-residue chain is Diaminopimelate epimerase (289 aa).

Residues Asn15 and Asn76 each coordinate substrate. Catalysis depends on Cys85, which acts as the Proton donor. Substrate contacts are provided by residues 86 to 87, Asn158, Asn191, and 209 to 210; these read GN and ER. Residue Cys218 is the Proton acceptor of the active site. Residue 219 to 220 coordinates substrate; it reads GT.

The protein belongs to the diaminopimelate epimerase family. In terms of assembly, homodimer.

Its subcellular location is the cytoplasm. It catalyses the reaction (2S,6S)-2,6-diaminopimelate = meso-2,6-diaminopimelate. Its pathway is amino-acid biosynthesis; L-lysine biosynthesis via DAP pathway; DL-2,6-diaminopimelate from LL-2,6-diaminopimelate: step 1/1. Catalyzes the stereoinversion of LL-2,6-diaminopimelate (L,L-DAP) to meso-diaminopimelate (meso-DAP), a precursor of L-lysine and an essential component of the bacterial peptidoglycan. The sequence is that of Diaminopimelate epimerase from Streptomyces coelicolor (strain ATCC BAA-471 / A3(2) / M145).